The primary structure comprises 137 residues: Fructose-bisphosphate aldolase C (137 aa).

The active-site Schiff-base intermediate with dihydroxyacetone-P is Lys3.

Belongs to the class I fructose-bisphosphate aldolase family. As to quaternary structure, homotetramer.

The enzyme catalyses beta-D-fructose 1,6-bisphosphate = D-glyceraldehyde 3-phosphate + dihydroxyacetone phosphate. The protein operates within carbohydrate degradation; glycolysis; D-glyceraldehyde 3-phosphate and glycerone phosphate from D-glucose: step 4/4. This chain is Fructose-bisphosphate aldolase C (ALDOC), found in Gallus gallus (Chicken).